Here is a 234-residue protein sequence, read N- to C-terminus: Glucosamine-6-phosphate deaminase (234 aa).

Asp62 functions as the Proton acceptor; for enolization step in the catalytic mechanism. Residue Asn128 is the For ring-opening step of the active site. His130 acts as the Proton acceptor; for ring-opening step in catalysis. Catalysis depends on Glu135, which acts as the For ring-opening step.

It belongs to the glucosamine/galactosamine-6-phosphate isomerase family. NagB subfamily.

The catalysed reaction is alpha-D-glucosamine 6-phosphate + H2O = beta-D-fructose 6-phosphate + NH4(+). It functions in the pathway amino-sugar metabolism; N-acetylneuraminate degradation; D-fructose 6-phosphate from N-acetylneuraminate: step 5/5. In terms of biological role, catalyzes the reversible isomerization-deamination of glucosamine 6-phosphate (GlcN6P) to form fructose 6-phosphate (Fru6P) and ammonium ion. This Streptococcus equi subsp. zooepidemicus (strain MGCS10565) protein is Glucosamine-6-phosphate deaminase.